We begin with the raw amino-acid sequence, 362 residues long: 3-dehydroquinate synthase (362 aa).

NAD(+)-binding positions include Asp-70–Lys-75, Gly-104–Asp-108, Thr-128–Thr-129, Lys-141, Lys-150, and Thr-168–Thr-171. Positions 183, 246, and 263 each coordinate Zn(2+).

It belongs to the sugar phosphate cyclases superfamily. Dehydroquinate synthase family. It depends on NAD(+) as a cofactor. Co(2+) serves as cofactor. The cofactor is Zn(2+).

It localises to the cytoplasm. The catalysed reaction is 7-phospho-2-dehydro-3-deoxy-D-arabino-heptonate = 3-dehydroquinate + phosphate. It functions in the pathway metabolic intermediate biosynthesis; chorismate biosynthesis; chorismate from D-erythrose 4-phosphate and phosphoenolpyruvate: step 2/7. Catalyzes the conversion of 3-deoxy-D-arabino-heptulosonate 7-phosphate (DAHP) to dehydroquinate (DHQ). The chain is 3-dehydroquinate synthase from Haemophilus influenzae (strain ATCC 51907 / DSM 11121 / KW20 / Rd).